The primary structure comprises 284 residues: Polyamine aminopropyltransferase (284 aa).

Residues 4 to 238 enclose the PABS domain; sequence EVWNTERLHD…GPMALGWGSH (235 aa). Position 33 (glutamine 33) interacts with S-methyl-5'-thioadenosine. Spermidine contacts are provided by histidine 64 and aspartate 88. S-methyl-5'-thioadenosine-binding positions include glutamate 108 and 140–141; that span reads DG. The active-site Proton acceptor is the aspartate 158. 158 to 161 is a binding site for spermidine; that stretch reads DSTD. Proline 165 contributes to the S-methyl-5'-thioadenosine binding site.

It belongs to the spermidine/spermine synthase family. In terms of assembly, homodimer or homotetramer.

It localises to the cytoplasm. The catalysed reaction is S-adenosyl 3-(methylsulfanyl)propylamine + putrescine = S-methyl-5'-thioadenosine + spermidine + H(+). The protein operates within amine and polyamine biosynthesis; spermidine biosynthesis; spermidine from putrescine: step 1/1. Catalyzes the irreversible transfer of a propylamine group from the amino donor S-adenosylmethioninamine (decarboxy-AdoMet) to putrescine (1,4-diaminobutane) to yield spermidine. This chain is Polyamine aminopropyltransferase, found in Ruegeria sp. (strain TM1040) (Silicibacter sp.).